A 130-amino-acid chain; its full sequence is Small ribosomal subunit protein uS9 (130 aa).

This sequence belongs to the universal ribosomal protein uS9 family.

The sequence is that of Small ribosomal subunit protein uS9 from Vibrio vulnificus (strain CMCP6).